Consider the following 96-residue polypeptide: (4S)-4-hydroxy-5-phosphonooxypentane-2,3-dione isomerase (96 aa).

The 90-residue stretch at 2–91 (HVTLVEINVH…MTGPRKKRLF (90 aa)) folds into the ABM domain.

This sequence belongs to the LsrG family. In terms of assembly, homodimer.

The protein resides in the cytoplasm. The enzyme catalyses (2S)-2-hydroxy-3,4-dioxopentyl phosphate = 3-hydroxy-2,4-dioxopentyl phosphate. Involved in the degradation of phospho-AI-2, thereby terminating induction of the lsr operon and closing the AI-2 signaling cycle. Catalyzes the conversion of (4S)-4-hydroxy-5-phosphonooxypentane-2,3-dione (P-DPD) to 3-hydroxy-5-phosphonooxypentane-2,4-dione (P-HPD). The chain is (4S)-4-hydroxy-5-phosphonooxypentane-2,3-dione isomerase from Shigella flexneri serotype 5b (strain 8401).